The following is a 376-amino-acid chain: MSQRDYYEVLGVARDASEDDIKRAYRKLALQYHPDRNPDDPEAEQKFKEAAEAYDVLRDGEKRARYDRFGHAGVGNGGGFGQGFSSNEDIFAHFSDIFGDLFGFAGAAGGRSRGPRPQAGSDLRYNLTISFRQAAKGDEVTLRLPKSVPCDECGGSGAAPGTRPETCRHCGGAGQIRQSQGFFQIAMPCPVCRGEGTVITSPCPKCKGSGQTQQVKELSVRIPAGVDTGNRLRLRGEGEPGIHGGPAGDLYVVISVEDDKTFRRQGQDLVVTREISFVQASLGDRIDVPTLDDDITLDIPAGTQSGEVFRLVDKGLPYLGHGHTGDLLVEIRVVTPTRLTKKQEELLREFALLDEEKPLEKVKKMARKIGKAMGMD.

The J domain maps to aspartate 5 to glycine 70. Residues glycine 137–valine 215 form a CR-type zinc finger. The Zn(2+) site is built by cysteine 150, cysteine 153, cysteine 167, cysteine 170, cysteine 189, cysteine 192, cysteine 203, and cysteine 206. 4 CXXCXGXG motif repeats span residues cysteine 150–glycine 157, cysteine 167–glycine 174, cysteine 189–glycine 196, and cysteine 203–glycine 210.

This sequence belongs to the DnaJ family. As to quaternary structure, homodimer. The cofactor is Zn(2+).

The protein resides in the cytoplasm. Its function is as follows. Participates actively in the response to hyperosmotic and heat shock by preventing the aggregation of stress-denatured proteins and by disaggregating proteins, also in an autonomous, DnaK-independent fashion. Unfolded proteins bind initially to DnaJ; upon interaction with the DnaJ-bound protein, DnaK hydrolyzes its bound ATP, resulting in the formation of a stable complex. GrpE releases ADP from DnaK; ATP binding to DnaK triggers the release of the substrate protein, thus completing the reaction cycle. Several rounds of ATP-dependent interactions between DnaJ, DnaK and GrpE are required for fully efficient folding. Also involved, together with DnaK and GrpE, in the DNA replication of plasmids through activation of initiation proteins. This Nitratidesulfovibrio vulgaris (strain ATCC 29579 / DSM 644 / CCUG 34227 / NCIMB 8303 / VKM B-1760 / Hildenborough) (Desulfovibrio vulgaris) protein is Chaperone protein DnaJ.